The sequence spans 849 residues: uncharacterized protein (849 aa).

Helical transmembrane passes span 587–607 (VALG…LGLF) and 620–640 (AGIL…TGDW).

It localises to the cell membrane. This is an uncharacterized protein from Methanocaldococcus jannaschii (strain ATCC 43067 / DSM 2661 / JAL-1 / JCM 10045 / NBRC 100440) (Methanococcus jannaschii).